Consider the following 474-residue polypeptide: Proline--tRNA ligase (474 aa).

Belongs to the class-II aminoacyl-tRNA synthetase family. ProS type 3 subfamily. As to quaternary structure, homodimer.

It is found in the cytoplasm. It carries out the reaction tRNA(Pro) + L-proline + ATP = L-prolyl-tRNA(Pro) + AMP + diphosphate. Its function is as follows. Catalyzes the attachment of proline to tRNA(Pro) in a two-step reaction: proline is first activated by ATP to form Pro-AMP and then transferred to the acceptor end of tRNA(Pro). This is Proline--tRNA ligase from Aster yellows witches'-broom phytoplasma (strain AYWB).